A 449-amino-acid polypeptide reads, in one-letter code: Probable secreted beta-glucosidase ARB_04747 (449 aa).

The N-terminal stretch at 1-21 is a signal peptide; that stretch reads MKFSSGILSLAVAASVQSVQA. Asn-57 carries N-linked (GlcNAc...) asparagine glycosylation. The segment at 96 to 185 is disordered; the sequence is SPPACPAPSY…RPFPDGEIDC (90 aa). The span at 98 to 125 shows a compositional bias: pro residues; the sequence is PACPAPSYVPSPPAAPSSPPAAPQPPSK. Basic and acidic residues predominate over residues 131–150; the sequence is EEPKKPEEPKKPEGPKKPEG.

This sequence belongs to the SUN family.

The protein resides in the secreted. It localises to the cell wall. Its function is as follows. Cell surface beta-glucosidase involved in cytokinesis, cell wall biogenesis, adhesion to host tissue; thus playing an important role in the host-pathogen interaction. Has hydrolytic activity on linear (1-&gt;3)-beta-D-glucans such as laminaribiose and other laminarioligosaccharides. In Arthroderma benhamiae (strain ATCC MYA-4681 / CBS 112371) (Trichophyton mentagrophytes), this protein is Probable secreted beta-glucosidase ARB_04747.